The following is a 355-amino-acid chain: Uroporphyrinogen decarboxylase (355 aa).

Substrate is bound by residues 27-31 (RQAGR), Asp78, Tyr155, Ser210, and His328.

The protein belongs to the uroporphyrinogen decarboxylase family. In terms of assembly, homodimer.

The protein localises to the cytoplasm. The enzyme catalyses uroporphyrinogen III + 4 H(+) = coproporphyrinogen III + 4 CO2. Its pathway is porphyrin-containing compound metabolism; protoporphyrin-IX biosynthesis; coproporphyrinogen-III from 5-aminolevulinate: step 4/4. Its function is as follows. Catalyzes the decarboxylation of four acetate groups of uroporphyrinogen-III to yield coproporphyrinogen-III. The sequence is that of Uroporphyrinogen decarboxylase from Pseudomonas aeruginosa (strain LESB58).